Consider the following 252-residue polypeptide: Large ribosomal subunit protein uL4 (252 aa).

The protein belongs to the universal ribosomal protein uL4 family. Part of the 50S ribosomal subunit.

In terms of biological role, one of the primary rRNA binding proteins, this protein initially binds near the 5'-end of the 23S rRNA. It is important during the early stages of 50S assembly. It makes multiple contacts with different domains of the 23S rRNA in the assembled 50S subunit and ribosome. Functionally, forms part of the polypeptide exit tunnel. The chain is Large ribosomal subunit protein uL4 from Methanococcus maripaludis (strain DSM 14266 / JCM 13030 / NBRC 101832 / S2 / LL).